The sequence spans 656 residues: Threonine--tRNA ligase (656 aa).

The 66-residue stretch at Leu2–Thr67 folds into the TGS domain. Residues Asp251–Pro542 form a catalytic region. Zn(2+) contacts are provided by Cys342, His393, and His519.

It belongs to the class-II aminoacyl-tRNA synthetase family. Homodimer. The cofactor is Zn(2+).

It localises to the cytoplasm. It catalyses the reaction tRNA(Thr) + L-threonine + ATP = L-threonyl-tRNA(Thr) + AMP + diphosphate + H(+). Its function is as follows. Catalyzes the attachment of threonine to tRNA(Thr) in a two-step reaction: L-threonine is first activated by ATP to form Thr-AMP and then transferred to the acceptor end of tRNA(Thr). Also edits incorrectly charged L-seryl-tRNA(Thr). In Bdellovibrio bacteriovorus (strain ATCC 15356 / DSM 50701 / NCIMB 9529 / HD100), this protein is Threonine--tRNA ligase.